The primary structure comprises 217 residues: Frataxin, mitochondrial (217 aa).

The transit peptide at 1-42 (MWTLGRRSVASFLPRSALPGFAPTRAGAPRPAKDLSLSGLPG) directs the protein to the mitochondrion.

This sequence belongs to the frataxin family. As to quaternary structure, component of the mitochondrial core iron-sulfur cluster (ISC) complex composed of NFS1, LYRM4, NDUFAB1, ISCU, FXN, and FDX2; this complex is a heterohexamer containing two copies of each monomer. Homodimer. Monomer (probable predominant form). Oligomer. Monomers and polymeric aggregates of &gt;1 MDa have been isolated from mitochondria. A small fraction of heterologous overexpressed recombinant frataxin forms high-molecular weight aggregates that incorporate iron. Interacts with LYRM4. Interacts (via ferrous form) with ISCU; the interaction is possible when both are bound to the dimeric form of the cysteine desulfurase complex (NFS1:LYRM4) and the interaction enhances FXN interaction to the dimeric form of the cysteine desulfurase complex (NFS1:LYRM4). Interacts with FECH; one iron-bound FXN monomer seems to interact with a FECH homodimer. Interacts with SDHA and SDHB. Interacts with ACO2; the interaction is dependent on citrate. Interacts with HSPA9. In terms of assembly, interacts with ACO1. Interacts with ISCU (cytoplasmic form). In terms of processing, processed in two steps by mitochondrial processing peptidase (MPP). MPP first cleaves the precursor to intermediate form and subsequently converts the intermediate to yield frataxin mature form (frataxin(81-210)) which is the predominant form. The additional forms, frataxin(56-210) and frataxin(78-210), seem to be produced when the normal maturation process is impaired; their physiological relevance is unsure.

Its subcellular location is the mitochondrion. The protein resides in the cytoplasm. The protein localises to the cytosol. It carries out the reaction 4 Fe(2+) + O2 + 4 H(+) = 4 Fe(3+) + 2 H2O. Its function is as follows. Functions as an activator of persulfide transfer to the scaffoding protein ISCU as component of the core iron-sulfur cluster (ISC) assembly complex and participates to the [2Fe-2S] cluster assembly. Accelerates sulfur transfer from NFS1 persulfide intermediate to ISCU and to small thiols such as L-cysteine and glutathione leading to persulfuration of these thiols and ultimately sulfide release. Binds ferrous ion and is released from FXN upon the addition of both L-cysteine and reduced FDX2 during [2Fe-2S] cluster assembly. The core iron-sulfur cluster (ISC) assembly complex is involved in the de novo synthesis of a [2Fe-2S] cluster, the first step of the mitochondrial iron-sulfur protein biogenesis. This process is initiated by the cysteine desulfurase complex (NFS1:LYRM4:NDUFAB1) that produces persulfide which is delivered on the scaffold protein ISCU in a FXN-dependent manner. Then this complex is stabilized by FDX2 which provides reducing equivalents to accomplish the [2Fe-2S] cluster assembly. Finally, the [2Fe-2S] cluster is transferred from ISCU to chaperone proteins, including HSCB, HSPA9 and GLRX5. May play a role in the protection against iron-catalyzed oxidative stress through its ability to catalyze the oxidation of Fe(2+) to Fe(3+); the oligomeric form but not the monomeric form has in vitro ferroxidase activity. May be able to store large amounts of iron in the form of a ferrihydrite mineral by oligomerization; however, the physiological relevance is unsure as reports are conflicting and the function has only been shown using heterologous overexpression systems. May function as an iron chaperone protein that protects the aconitase [4Fe-4S]2+ cluster from disassembly and promotes enzyme reactivation. May play a role as a high affinity iron binding partner for FECH that is capable of both delivering iron to ferrochelatase and mediating the terminal step in mitochondrial heme biosynthesis. Functionally, modulates the RNA-binding activity of ACO1. May be involved in the cytoplasmic iron-sulfur protein biogenesis. May contribute to oxidative stress resistance and overall cell survival. In Bos taurus (Bovine), this protein is Frataxin, mitochondrial.